A 105-amino-acid polypeptide reads, in one-letter code: Large ribosomal subunit protein eL36 (105 aa).

A disordered region spans residues 1–20; the sequence is MAKEAPAKTGLAVGLNKGHK.

This sequence belongs to the eukaryotic ribosomal protein eL36 family.

This is Large ribosomal subunit protein eL36 (rpl36) from Trichoderma hamatum.